Here is an 84-residue protein sequence, read N- to C-terminus: Large ribosomal subunit protein bL27 (84 aa).

Residues 1–24 (MAHKKGAASTKNGRDSNSQRLGVK) are disordered. The segment covering 9–20 (STKNGRDSNSQR) has biased composition (polar residues).

The protein belongs to the bacterial ribosomal protein bL27 family.

The protein is Large ribosomal subunit protein bL27 of Nocardioides sp. (strain ATCC BAA-499 / JS614).